Here is a 198-residue protein sequence, read N- to C-terminus: MEHYLSLLVRSIFIENMALSFFLGMCTFLAVSKKVKTSFGLGVAVIVVLTIAIPVNNLVYNLLLKDGAIVDGVDLTFLNFITFIGVIAALVQILEMILDRFFPPLYNALGIFLPLITVNCAIFGGVSFMVQRDYNFVESIVYGFGSGVGWMLAIVALAGIREKMKYSDVPPGLRGLGITFITVGLMALGFMSFSGVQL.

The next 6 helical transmembrane spans lie at 11 to 31, 39 to 59, 77 to 97, 110 to 130, 140 to 160, and 176 to 196; these read SIFI…FLAV, FGLG…NNLV, FLNF…LEMI, GIFL…SFMV, IVYG…LAGI, and LGIT…FSGV.

This sequence belongs to the NqrDE/RnfAE family. As to quaternary structure, composed of six subunits; NqrA, NqrB, NqrC, NqrD, NqrE and NqrF.

Its subcellular location is the cell inner membrane. The enzyme catalyses a ubiquinone + n Na(+)(in) + NADH + H(+) = a ubiquinol + n Na(+)(out) + NAD(+). In terms of biological role, NQR complex catalyzes the reduction of ubiquinone-1 to ubiquinol by two successive reactions, coupled with the transport of Na(+) ions from the cytoplasm to the periplasm. NqrA to NqrE are probably involved in the second step, the conversion of ubisemiquinone to ubiquinol. This chain is Na(+)-translocating NADH-quinone reductase subunit E, found in Photobacterium profundum (strain SS9).